The sequence spans 239 residues: Small ribosomal subunit protein uS3c (239 aa).

The KH type-2 domain maps to 43-139; the sequence is IKNYIQKNRK…RLNISIEKVK (97 aa). Positions 50 to 80 are disordered; sequence NRKKSSNRKLESDSSSEVITHNRKNDSGSSS.

It belongs to the universal ribosomal protein uS3 family. As to quaternary structure, part of the 30S ribosomal subunit.

Its subcellular location is the plastid. It is found in the chloroplast. This chain is Small ribosomal subunit protein uS3c (rps3), found in Lolium perenne (Perennial ryegrass).